The sequence spans 264 residues: Undecaprenyl-diphosphatase (264 aa).

The next 6 helical transmembrane spans lie at 41-61 (NLAFTIVVHVATVCSTLVILW), 82-102 (YVINIVISMIPIGIVGVFFKD), 106-126 (AIFGSGLMIVGCMLLLTAALL), 140-160 (ISMKDAFIIGLAQACAVLPGL), 213-233 (IPALSLIVGFLAAFVAGCLAC), and 244-264 (KLIYFAIYCAIAGLAVIITQL).

This sequence belongs to the UppP family.

Its subcellular location is the cell inner membrane. The catalysed reaction is di-trans,octa-cis-undecaprenyl diphosphate + H2O = di-trans,octa-cis-undecaprenyl phosphate + phosphate + H(+). In terms of biological role, catalyzes the dephosphorylation of undecaprenyl diphosphate (UPP). Confers resistance to bacitracin. This is Undecaprenyl-diphosphatase from Bacteroides thetaiotaomicron (strain ATCC 29148 / DSM 2079 / JCM 5827 / CCUG 10774 / NCTC 10582 / VPI-5482 / E50).